Here is an 86-residue protein sequence, read N- to C-terminus: Neurotoxin E1x (86 aa).

An N-terminal signal peptide occupies residues 1–19 (MNSLLMITACLVVIGTVWA). One can recognise an LCN-type CS-alpha/beta domain in the interval 20-84 (KEGYLVDVKG…TWPLPNKTCG (65 aa)). 4 cysteine pairs are disulfide-bonded: cysteine 30–cysteine 83, cysteine 34–cysteine 59, cysteine 43–cysteine 64, and cysteine 47–cysteine 66. Position 83 is a cysteine amide (cysteine 83).

This sequence belongs to the long (4 C-C) scorpion toxin superfamily. Sodium channel inhibitor family. Beta subfamily. As to expression, expressed by the venom gland.

It localises to the secreted. Functionally, binds to sodium channels (Nav) and inhibits the inactivation of the activated channels, thereby blocking neuronal transmission. This chain is Neurotoxin E1x, found in Centruroides sculpturatus (Arizona bark scorpion).